A 387-amino-acid polypeptide reads, in one-letter code: Succinate--CoA ligase [ADP-forming] subunit beta (387 aa).

ATP contacts are provided by residues lysine 46, 53–55, glutamate 99, alanine 102, and glutamate 107; that span reads GRG. 2 residues coordinate Mg(2+): asparagine 199 and aspartate 213. Residues asparagine 264 and 321-323 contribute to the substrate site; that span reads GIV.

Belongs to the succinate/malate CoA ligase beta subunit family. As to quaternary structure, heterotetramer of two alpha and two beta subunits. Requires Mg(2+) as cofactor.

The catalysed reaction is succinate + ATP + CoA = succinyl-CoA + ADP + phosphate. It catalyses the reaction GTP + succinate + CoA = succinyl-CoA + GDP + phosphate. The protein operates within carbohydrate metabolism; tricarboxylic acid cycle; succinate from succinyl-CoA (ligase route): step 1/1. Functionally, succinyl-CoA synthetase functions in the citric acid cycle (TCA), coupling the hydrolysis of succinyl-CoA to the synthesis of either ATP or GTP and thus represents the only step of substrate-level phosphorylation in the TCA. The beta subunit provides nucleotide specificity of the enzyme and binds the substrate succinate, while the binding sites for coenzyme A and phosphate are found in the alpha subunit. The sequence is that of Succinate--CoA ligase [ADP-forming] subunit beta from Campylobacter jejuni subsp. doylei (strain ATCC BAA-1458 / RM4099 / 269.97).